Here is a 132-residue protein sequence, read N- to C-terminus: Small ribosomal subunit protein uS8c (132 aa).

Belongs to the universal ribosomal protein uS8 family. In terms of assembly, part of the 30S ribosomal subunit.

The protein localises to the plastid. It is found in the cyanelle. Its function is as follows. One of the primary rRNA binding proteins, it binds directly to 16S rRNA central domain where it helps coordinate assembly of the platform of the 30S subunit. This Cyanophora paradoxa protein is Small ribosomal subunit protein uS8c (rps8).